Here is a 133-residue protein sequence, read N- to C-terminus: Small ribosomal subunit protein uS8 (133 aa).

It belongs to the universal ribosomal protein uS8 family. Part of the 30S ribosomal subunit. Contacts proteins S5 and S12.

Functionally, one of the primary rRNA binding proteins, it binds directly to 16S rRNA central domain where it helps coordinate assembly of the platform of the 30S subunit. The polypeptide is Small ribosomal subunit protein uS8 (Orientia tsutsugamushi (strain Boryong) (Rickettsia tsutsugamushi)).